The sequence spans 89 residues: Elongation factor 1-beta (89 aa).

This sequence belongs to the EF-1-beta/EF-1-delta family.

Functionally, promotes the exchange of GDP for GTP in EF-1-alpha/GDP, thus allowing the regeneration of EF-1-alpha/GTP that could then be used to form the ternary complex EF-1-alpha/GTP/AAtRNA. This Methanothermobacter thermautotrophicus (strain ATCC 29096 / DSM 1053 / JCM 10044 / NBRC 100330 / Delta H) (Methanobacterium thermoautotrophicum) protein is Elongation factor 1-beta (ef1b).